A 629-amino-acid polypeptide reads, in one-letter code: MDFPSRFDVIVVGGGHAGTEAALAAARMGVKTLLLSHNIETLGQMSCNPAIGGIGKSHLVKEIDALDGAMALATDQAGIQFRTLNSRKGPAVRATRAQADRILYKAAIRHKLENQENLWLFQQSAEDLIVENGAARGVITQTGIRFNSKTVVLTAGTFLGGVIHIGLENHSGGRAGDPPSIGLAQKLRALPFRVDRLKTGTPPRIDARSVDFSQMQAQPGDDIDPVMSYMGNRAMHPRQIECFITHTNERTHDIIRAGMDRSPMYTGVIEGVGPRYCPSIEDKIVRFADKNSHQIFIEPEGLTTHELYPNGISTSLPFDVQIELVRSMKGMENAHIIRPGYAIEYDYFNPQDLKYSLETKHMPGLFFAGQINGTTGYEEAGAQGLLAGLNAALLAQEKDAWTPRRDEAYLGVLVDDLISMGTKEPYRMFTSRAEYRLILREDNADMRLTEKGRELGLVSDERWAAFCKKREAIELETQRLRSSWIVPNTPEADSINPKLETPITHEYSLLDLLKRPNIVYSDIANLKNGLDEPVDEQVSEQVQIAVKYAGYISRQAEDIERLRRQENTELPDDLDYSKMEGLSNEIKQKLTQLRPATLAAASRIQGVTPAAVSLLLIHLKKRAIARKSA.

13–18 (GGGHAG) serves as a coordination point for FAD. 273-287 (GPRYCPSIEDKIVRF) contacts NAD(+).

This sequence belongs to the MnmG family. As to quaternary structure, homodimer. Heterotetramer of two MnmE and two MnmG subunits. It depends on FAD as a cofactor.

It localises to the cytoplasm. Functionally, NAD-binding protein involved in the addition of a carboxymethylaminomethyl (cmnm) group at the wobble position (U34) of certain tRNAs, forming tRNA-cmnm(5)s(2)U34. The chain is tRNA uridine 5-carboxymethylaminomethyl modification enzyme MnmG from Marinomonas sp. (strain MWYL1).